Here is a 395-residue protein sequence, read N- to C-terminus: MAAASGYTDLREKLKSMTSRDNYKAGSREAAAAAAAAVAAAAAAAAAAEPYPVSGTTKRKYQEDSDPERSDYEEHQLQKEEEARKVKSGIRQIRLFSQDECSKIEARIDEVVSRAEKGLYNEHTVDRAPLRNKYFFGEGYTYGAQLQKRGPGQERLYPPGDVDEIPEWVHQLVIQKLVEHRVIPEGFVNSAVINDYQPGGCIVSHVDPIHIFERPIVSVSFFSDSALCFGCKFQFKPIRVSEPVLSLPVRRGSVTVLSGYAADEITHCIRPQDIKERRAVIILRKTRLDAPRLETKSLSSSTLPPSYASDRLSGNTRDPALKPKRSHRKADPDAAHRPRILEMDKEENRRSVLLPTHRRRGSFSSENYWRKSYESSEDCPEAASSPTRKVKMRRH.

2 disordered regions span residues 1–28 (MAAA…AGSR) and 47–83 (AAEP…EEEA). The residue at position 2 (Ala-2) is an N-acetylalanine. A Glycyl lysine isopeptide (Lys-Gly) (interchain with G-Cter in ubiquitin) cross-link involves residue Lys-58. The span at 60–83 (KYQEDSDPERSDYEEHQLQKEEEA) shows a compositional bias: basic and acidic residues. 2 positions are modified to phosphoserine: Ser-65 and Ser-70. A coiled-coil region spans residues 68–117 (ERSDYEEHQLQKEEEARKVKSGIRQIRLFSQDECSKIEARIDEVVSRAEK). The residue at position 72 (Tyr-72) is a Phosphotyrosine. Lys-87 participates in a covalent cross-link: Glycyl lysine isopeptide (Lys-Gly) (interchain with G-Cter in SUMO1). A Phosphoserine modification is found at Ser-88. Lys-133 is modified (N6-acetyllysine). Tyr-140 is an active-site residue. Asn-194, Tyr-196, and His-205 together coordinate 2-oxoglutarate. An intrachain disulfide couples Cys-231 to Cys-268. At Lys-236 the chain carries N6-acetyllysine. Residues His-267 and Arg-278 each coordinate 2-oxoglutarate. Residues 294 to 395 (ETKSLSSSTL…PTRKVKMRRH (102 aa)) form a disordered region. The segment covering 296 to 306 (KSLSSSTLPPS) has biased composition (low complexity). A Glycyl lysine isopeptide (Lys-Gly) (interchain with G-Cter in SUMO1) cross-link involves residue Lys-322. Ser-326 is subject to Phosphoserine. Residue Lys-329 forms a Glycyl lysine isopeptide (Lys-Gly) (interchain with G-Cter in SUMO2) linkage. Over residues 329–350 (KADPDAAHRPRILEMDKEENRR) the composition is skewed to basic and acidic residues. Arg-360 carries the post-translational modification Omega-N-methylarginine. Ser-362, Ser-372, Ser-375, and Ser-385 each carry phosphoserine.

This sequence belongs to the alkB family. As to quaternary structure, monomer. Interacts with RBM33; promoting desumoylation by SENP1 and recruitment to N(6)-methyladenosine-containing mRNAs. Interacts (when acetylated by KAT8) with PSPC1; interaction facilitates recognition of N(6)-methyladenosine (m6A) mRNA. Requires Fe(2+) as cofactor. In terms of processing, phosphorylated at Ser-88 and Ser-326 in response to reactive oxygen species (ROS), promoting sumoylation and inactivation. Acetylated by KAT8 at Lys-236, promoting interaction with PSPC1, thereby facilitating recognition of N(6)-methyladenosine (m6A) mRNA by ALKBH5. Deacetylated at Lys-236 by HDAC7. Post-translationally, sumoylated at Lys-87 and Lys-322 by PIAS4 following phosphorylation at Ser-88 and Ser-326 in response to reactive oxygen species (ROS), inhibiting the RNA demethylase activity. Desumoylated by SENP1; relieving RNA demethylase inhibition, leading to N(6)-methyladenosine-containing mRNAs demethylation. In terms of processing, ubiquitinated at Lys-58 via 'Lys-48'-linked polyubiquitin chain, leading to its degradation by the proteasome. Deubiquitinated at Lys-58 by USP9X, promoting its stabilizazion.

It localises to the nucleus speckle. It catalyses the reaction an N(6)-methyladenosine in mRNA + 2-oxoglutarate + O2 = an adenosine in mRNA + formaldehyde + succinate + CO2. RNA demethylase activity is inhibited following sumoylation. Inhibition is relieved following desumoylation. Dioxygenase that specifically demethylates N(6)-methyladenosine (m6A) RNA, the most prevalent internal modification of messenger RNA (mRNA) in higher eukaryotes. Demethylates RNA by oxidative demethylation, which requires molecular oxygen, alpha-ketoglutarate and iron. Demethylation of m6A mRNA affects mRNA processing, translation and export. Can also demethylate N(6)-methyladenosine in single-stranded DNA (in vitro). Required for the late meiotic and haploid phases of spermatogenesis by mediating m6A demethylation in spermatocytes and round spermatids: m6A demethylation of target transcripts is required for correct splicing and the production of longer 3'-UTR mRNAs in male germ cells. Involved in paraspeckle assembly, a nuclear membraneless organelle, by undergoing liquid-liquid phase separation. Paraspeckle assembly is coupled with m6A demethylation of RNAs, such as NEAT1 non-coding RNA. Also acts as a negative regulator of T-cell development: inhibits gamma-delta T-cell proliferation via demethylation of JAG1 and NOTCH2 transcripts. Inhibits regulatory T-cell (Treg) recruitment by mediating demethylation and destabilization of CCL28 mRNAs. This is RNA demethylase ALKBH5 (Alkbh5) from Rattus norvegicus (Rat).